The following is a 158-amino-acid chain: NADH-quinone oxidoreductase subunit B (158 aa).

4 residues coordinate [4Fe-4S] cluster: cysteine 37, cysteine 38, cysteine 102, and cysteine 132.

The protein belongs to the complex I 20 kDa subunit family. NDH-1 is composed of 14 different subunits. Subunits NuoB, C, D, E, F, and G constitute the peripheral sector of the complex. The cofactor is [4Fe-4S] cluster.

The protein resides in the cell inner membrane. The enzyme catalyses a quinone + NADH + 5 H(+)(in) = a quinol + NAD(+) + 4 H(+)(out). In terms of biological role, NDH-1 shuttles electrons from NADH, via FMN and iron-sulfur (Fe-S) centers, to quinones in the respiratory chain. Couples the redox reaction to proton translocation (for every two electrons transferred, four hydrogen ions are translocated across the cytoplasmic membrane), and thus conserves the redox energy in a proton gradient. The sequence is that of NADH-quinone oxidoreductase subunit B from Bordetella parapertussis (strain 12822 / ATCC BAA-587 / NCTC 13253).